The sequence spans 243 residues: UPF0173 metal-dependent hydrolase Caur_2542 (243 aa).

It belongs to the UPF0173 family.

The polypeptide is UPF0173 metal-dependent hydrolase Caur_2542 (Chloroflexus aurantiacus (strain ATCC 29366 / DSM 635 / J-10-fl)).